We begin with the raw amino-acid sequence, 265 residues long: Apolipoprotein A-I (265 aa).

Positions 1–18 (MKAVVLTLAVLFLTGSQA) are cleaved as a signal peptide. 2 repeat units span residues 67-88 (LKLL…EQLG) and 89-110 (PVTQ…QEMS). A 10 X approximate tandem repeats region spans residues 67–265 (LKLLDNWDSL…DEASKKLNAQ (199 aa)). M109 is subject to Methionine sulfoxide. Residues 111-121 (KDLEEVKKKVQ) form a 3; half-length repeat. 5 tandem repeats follow at residues 122 to 142 (PYLD…RQKM), 144 to 165 (PLGA…EKLS), 166 to 187 (PLAE…QHVA), 188 to 209 (PYSD…EGGG), and 210 to 230 (SLAE…EKAK). Residue M135 is modified to Methionine sulfoxide. A 9; half-length repeat occupies 231-241 (PALEDLRQGLL). The stretch at 242–265 (PVLENLKVSILAAIDEASKKLNAQ) is repeat 10.

Belongs to the apolipoprotein A1/A4/E family. Homodimer. Interacts with APOA1BP and CLU. Component of a sperm activating protein complex (SPAP), consisting of APOA1, an immunoglobulin heavy chain, an immunoglobulin light chain and albumin. Interacts with NDRG1. Interacts with SCGB3A2. Interacts with NAXE and YJEFN3. Glycosylated. In terms of processing, palmitoylated. Post-translationally, phosphorylation sites are present in the extracellular medium. As to expression, major protein of plasma HDL, also found in chylomicrons. Synthesized predominantly in the intestine and the liver.

Its subcellular location is the secreted. Functionally, participates in the reverse transport of cholesterol from tissues to the liver for excretion by promoting cholesterol efflux from tissues and by acting as a cofactor for the lecithin cholesterol acyltransferase (LCAT). As part of the SPAP complex, activates spermatozoa motility. The protein is Apolipoprotein A-I (APOA1) of Sus scrofa (Pig).